Reading from the N-terminus, the 83-residue chain is Large ribosomal subunit protein bL27 (83 aa).

A disordered region spans residues 1–25 (MAHKKGQGASRNGRDSESKRLGLKV).

It belongs to the bacterial ribosomal protein bL27 family.

The protein is Large ribosomal subunit protein bL27 of Chlamydia muridarum (strain MoPn / Nigg).